Here is a 647-residue protein sequence, read N- to C-terminus: Chaperone protein DnaK (647 aa).

Phosphothreonine; by autocatalysis is present on Thr-198. The segment at 606-634 is disordered; that stretch reads GASAEGMDPNQFQQGADNAGESNQADDDV. Over residues 615 to 628 the composition is skewed to polar residues; the sequence is NQFQQGADNAGESN.

The protein belongs to the heat shock protein 70 family.

Acts as a chaperone. This Psychrobacter cryohalolentis (strain ATCC BAA-1226 / DSM 17306 / VKM B-2378 / K5) protein is Chaperone protein DnaK.